Consider the following 338-residue polypeptide: Fructose-1,6-bisphosphatase class 1 (338 aa).

The Mg(2+) site is built by Glu90, Asp112, Leu114, and Asp115. Residues 115–118 (DGSS), Asn207, and Lys273 contribute to the substrate site. Glu279 contributes to the Mg(2+) binding site.

The protein belongs to the FBPase class 1 family. Homotetramer. Requires Mg(2+) as cofactor.

It localises to the cytoplasm. The catalysed reaction is beta-D-fructose 1,6-bisphosphate + H2O = beta-D-fructose 6-phosphate + phosphate. It participates in carbohydrate biosynthesis; gluconeogenesis. The polypeptide is Fructose-1,6-bisphosphatase class 1 (Stenotrophomonas maltophilia (strain R551-3)).